The primary structure comprises 160 residues: Lymphocyte antigen 96 (160 aa).

A signal peptide spans 1 to 16; sequence MFPFMLFSTLFSSIFT. Cystine bridges form between C25–C51, C37–C148, and C95–C105. N26 carries an N-linked (GlcNAc...) asparagine glycan. Residue N114 is glycosylated (N-linked (GlcNAc...) asparagine). The tract at residues 119 to 123 is interaction with lipopolysaccharide; it reads FSFQG. The N-linked (GlcNAc...) asparagine glycan is linked to N150.

Heterogeneous homomer formed from homodimers; disulfide-linked. Belongs to the lipopolysaccharide (LPS) receptor, a multi-protein complex containing at least CD14, LY96 and TLR4. Binds to the extracellular domains of TLR2 and TLR4. Ligand binding induces interaction with TLR4 and oligomerization of the complex. N-glycosylated.

It is found in the secreted. The protein localises to the extracellular space. Binds bacterial lipopolysaccharide (LPS). Cooperates with TLR4 in the innate immune response to bacterial lipopolysaccharide (LPS), and with TLR2 in the response to cell wall components from Gram-positive and Gram-negative bacteria. Enhances TLR4-dependent activation of NF-kappa-B. Cells expressing both LY96 and TLR4, but not TLR4 alone, respond to LPS. This Bos taurus (Bovine) protein is Lymphocyte antigen 96 (LY96).